The primary structure comprises 670 residues: Glycine--tRNA ligase beta subunit (670 aa).

It belongs to the class-II aminoacyl-tRNA synthetase family. As to quaternary structure, tetramer of two alpha and two beta subunits.

The protein localises to the cytoplasm. It catalyses the reaction tRNA(Gly) + glycine + ATP = glycyl-tRNA(Gly) + AMP + diphosphate. In Thermotoga neapolitana (strain ATCC 49049 / DSM 4359 / NBRC 107923 / NS-E), this protein is Glycine--tRNA ligase beta subunit.